The following is a 230-amino-acid chain: Aquaporin Z (230 aa).

Helical transmembrane passes span 9 to 29 and 35 to 55; these read AELI…VLAA and IGVL…AFAI. The short motif at 64–66 is the NPA 1 element; the sequence is NPA. A run of 3 helical transmembrane segments spans residues 83–103, 131–151, and 160–180; these read LPYV…IYLI, LGAG…VIMG, and GFAP…SIPV. An NPA 2 motif is present at residues 186–188; sequence NPA. The helical transmembrane segment at 194–214 threads the bilayer; it reads ALFVGGWALQQLWLFWVAPLI.

It belongs to the MIP/aquaporin (TC 1.A.8) family. As to quaternary structure, homotetramer.

It localises to the cell inner membrane. It catalyses the reaction H2O(in) = H2O(out). Channel that permits osmotically driven movement of water in both directions. It is involved in the osmoregulation and in the maintenance of cell turgor during volume expansion in rapidly growing cells. It mediates rapid entry or exit of water in response to abrupt changes in osmolarity. This chain is Aquaporin Z, found in Pseudomonas putida (strain ATCC 47054 / DSM 6125 / CFBP 8728 / NCIMB 11950 / KT2440).